Here is a 393-residue protein sequence, read N- to C-terminus: Mitogen-activated protein kinase SIPK (393 aa).

The segment covering 1 to 11 (MDGSGQQTDTM) has biased composition (polar residues). Residues 1–31 (MDGSGQQTDTMMSDAGAEQPPPAPQPVAGMD) are disordered. In terms of domain architecture, Protein kinase spans 60–345 (KPPILPIGKG…VEGALAHPYL (286 aa)). Residues 66–74 (IGKGAYGIV) and Lys-89 contribute to the ATP site. Asp-186 serves as the catalytic Proton acceptor. A TXY motif is present at residues 218–220 (TEY).

Belongs to the protein kinase superfamily. CMGC Ser/Thr protein kinase family. MAP kinase subfamily. As to quaternary structure, interacts with SIPKK.

The enzyme catalyses L-tyrosyl-[protein] + ATP = O-phospho-L-tyrosyl-[protein] + ADP + H(+). It carries out the reaction L-seryl-[protein] + ATP = O-phospho-L-seryl-[protein] + ADP + H(+). The catalysed reaction is L-threonyl-[protein] + ATP = O-phospho-L-threonyl-[protein] + ADP + H(+). With respect to regulation, activated by threonine and tyrosine phosphorylation. Its function is as follows. Phosphorylates myelin basic protein (MBP) in vitro. May be involved in disease resistance. The chain is Mitogen-activated protein kinase SIPK from Nicotiana tabacum (Common tobacco).